We begin with the raw amino-acid sequence, 474 residues long: Alpha-galactosidase (474 aa).

Positions 1-22 (MINFSLLTSIVLLASKVVGVSP) are cleaved as a signal peptide. 2 cysteine pairs are disulfide-bonded: C43-C75 and C122-C152. N44 carries an N-linked (GlcNAc...) asparagine glycan. Substrate is bound by residues D73, D74, and K148. Catalysis depends on D150, which acts as the Nucleophile. N-linked (GlcNAc...) asparagine glycosylation occurs at N176. R206 is a binding site for substrate. D210 serves as the catalytic Proton donor. 2 disulfide bridges follow: C222-C238 and C224-C231. Q252 lines the substrate pocket. Residues N271, N414, N423, N436, and N455 are each glycosylated (N-linked (GlcNAc...) asparagine).

It belongs to the glycosyl hydrolase 27 family. Homotetramer.

It localises to the secreted. It carries out the reaction Hydrolysis of terminal, non-reducing alpha-D-galactose residues in alpha-D-galactosides, including galactose oligosaccharides, galactomannans and galactolipids.. This chain is Alpha-galactosidase (MEL), found in Torulaspora delbrueckii (Yeast).